Reading from the N-terminus, the 615-residue chain is Chaperone protein HtpG (615 aa).

The tract at residues 1–335 (MSAEKQTHGF…APDLPLNVSR (335 aa)) is a; substrate-binding. The b stretch occupies residues 336–541 (ELLQDYGPVQ…EDQLGPQMRR (206 aa)). The interval 542–615 (MLEAAGQPVP…RMQALLSQSV (74 aa)) is c.

This sequence belongs to the heat shock protein 90 family. As to quaternary structure, homodimer.

It is found in the cytoplasm. Molecular chaperone. Has ATPase activity. This chain is Chaperone protein HtpG, found in Alcanivorax borkumensis (strain ATCC 700651 / DSM 11573 / NCIMB 13689 / SK2).